Consider the following 543-residue polypeptide: Type I restriction enzyme MpnII methylase subunit (543 aa).

S-adenosyl-L-methionine is bound by residues 208–213 (EFFTPQ), 240–242 (SGS), and Glu-265.

The protein belongs to the N(4)/N(6)-methyltransferase family. As to quaternary structure, the methyltransferase is composed of M and S polypeptides.

The catalysed reaction is a 2'-deoxyadenosine in DNA + S-adenosyl-L-methionine = an N(6)-methyl-2'-deoxyadenosine in DNA + S-adenosyl-L-homocysteine + H(+). Functionally, the subtype gamma methyltransferase (M) subunit of a type I restriction enzyme. The M and S subunits together form a methyltransferase (MTase) that probably methylates A-2 on the top strand and A-3 on the bottom strand of the sequence 5'-GAN(7)TAY-3'. As the bacterial DNA is methylated on this sequence and this is the only type I methylase in the genome, it is probably responsible for all of the methylation on this site in the genome. The R subunit has multiple frameshifts and is probably not expressed in this bacteria. The sequence is that of Type I restriction enzyme MpnII methylase subunit from Mycoplasma pneumoniae (strain ATCC 29342 / M129 / Subtype 1) (Mycoplasmoides pneumoniae).